Consider the following 345-residue polypeptide: Biotin synthase (345 aa).

One can recognise a Radical SAM core domain in the interval Arg-38 to Ser-256. Residues Cys-53, Cys-57, and Cys-60 each contribute to the [4Fe-4S] cluster site. [2Fe-2S] cluster is bound by residues Cys-97, Cys-128, Cys-188, and Arg-260.

Belongs to the radical SAM superfamily. Biotin synthase family. In terms of assembly, homodimer. The cofactor is [4Fe-4S] cluster. Requires [2Fe-2S] cluster as cofactor.

The enzyme catalyses (4R,5S)-dethiobiotin + (sulfur carrier)-SH + 2 reduced [2Fe-2S]-[ferredoxin] + 2 S-adenosyl-L-methionine = (sulfur carrier)-H + biotin + 2 5'-deoxyadenosine + 2 L-methionine + 2 oxidized [2Fe-2S]-[ferredoxin]. It functions in the pathway cofactor biosynthesis; biotin biosynthesis; biotin from 7,8-diaminononanoate: step 2/2. Its function is as follows. Catalyzes the conversion of dethiobiotin (DTB) to biotin by the insertion of a sulfur atom into dethiobiotin via a radical-based mechanism. The sequence is that of Biotin synthase from Yersinia pseudotuberculosis serotype O:1b (strain IP 31758).